The primary structure comprises 185 residues: Ribosome-recycling factor (185 aa).

The protein belongs to the RRF family.

The protein localises to the cytoplasm. Its function is as follows. Responsible for the release of ribosomes from messenger RNA at the termination of protein biosynthesis. May increase the efficiency of translation by recycling ribosomes from one round of translation to another. The sequence is that of Ribosome-recycling factor from Thermosipho melanesiensis (strain DSM 12029 / CIP 104789 / BI429).